The chain runs to 74 residues: ATP synthase subunit c (74 aa).

Helical transmembrane passes span 8-28 (FIGA…VGNI) and 52-72 (IGFA…LMVL).

The protein belongs to the ATPase C chain family. As to quaternary structure, F-type ATPases have 2 components, F(1) - the catalytic core - and F(0) - the membrane proton channel. F(1) has five subunits: alpha(3), beta(3), gamma(1), delta(1), epsilon(1). F(0) has three main subunits: a(1), b(2) and c(10-14). The alpha and beta chains form an alternating ring which encloses part of the gamma chain. F(1) is attached to F(0) by a central stalk formed by the gamma and epsilon chains, while a peripheral stalk is formed by the delta and b chains.

The protein localises to the cell inner membrane. F(1)F(0) ATP synthase produces ATP from ADP in the presence of a proton or sodium gradient. F-type ATPases consist of two structural domains, F(1) containing the extramembraneous catalytic core and F(0) containing the membrane proton channel, linked together by a central stalk and a peripheral stalk. During catalysis, ATP synthesis in the catalytic domain of F(1) is coupled via a rotary mechanism of the central stalk subunits to proton translocation. Functionally, key component of the F(0) channel; it plays a direct role in translocation across the membrane. A homomeric c-ring of between 10-14 subunits forms the central stalk rotor element with the F(1) delta and epsilon subunits. The protein is ATP synthase subunit c of Paramagnetospirillum magneticum (strain ATCC 700264 / AMB-1) (Magnetospirillum magneticum).